The sequence spans 176 residues: Large ribosomal subunit protein bL17m (176 aa).

The N-terminal 8 residues, 1–8 (MRLSLAAA), are a transit peptide targeting the mitochondrion.

This sequence belongs to the bacterial ribosomal protein bL17 family. Component of the mitochondrial ribosome large subunit (39S) which comprises a 16S rRNA and about 50 distinct proteins.

It is found in the mitochondrion. This is Large ribosomal subunit protein bL17m (Mrpl17) from Mus musculus (Mouse).